Here is a 169-residue protein sequence, read N- to C-terminus: Myosin regulatory light chain 2, skeletal muscle isoform A (169 aa).

Ser21 is subject to Phosphoserine. 3 EF-hand domains span residues 26–61 (SQIQ…MGQL), 96–131 (DPED…QCDR), and 132–167 (FTAE…GEEK). Ca(2+)-binding residues include Asp39, Asn41, Asp43, and Asp50.

In terms of assembly, myosin is a hexamer of 2 heavy chains and 4 light chains. Interacts with nanos3; the interaction negatively regulates mylpfa phosphorylation.

Its function is as follows. Myosin regulatory subunit that plays a role to maintain muscle integrity during early development. Plays a role in muscle contraction. The protein is Myosin regulatory light chain 2, skeletal muscle isoform A (mylpfa) of Danio rerio (Zebrafish).